We begin with the raw amino-acid sequence, 82 residues long: Chlorosome protein E (82 aa).

A bacteriochlorophyll c is bound at residue histidine 26. The disordered stretch occupies residues 55–82 (GSSGLKGSSPKYSGYATPSKEVKSRFEK). A compositionally biased stretch (low complexity) spans 59–69 (LKGSSPKYSGY).

Belongs to the BChl C/E-binding protein family.

Its subcellular location is the chlorosome. The protein localises to the chlorosome envelope. Its function is as follows. Component of the photosynthetic apparatus. The light harvesting B740 complex binds bacteriochlorophyll c. This chain is Chlorosome protein E (csmE), found in Chlorobaculum tepidum (strain ATCC 49652 / DSM 12025 / NBRC 103806 / TLS) (Chlorobium tepidum).